A 478-amino-acid chain; its full sequence is Aspartyl/glutamyl-tRNA(Asn/Gln) amidotransferase subunit B 1 (478 aa).

This sequence belongs to the GatB/GatE family. GatB subfamily. In terms of assembly, heterotrimer of A, B and C subunits.

It catalyses the reaction L-glutamyl-tRNA(Gln) + L-glutamine + ATP + H2O = L-glutaminyl-tRNA(Gln) + L-glutamate + ADP + phosphate + H(+). It carries out the reaction L-aspartyl-tRNA(Asn) + L-glutamine + ATP + H2O = L-asparaginyl-tRNA(Asn) + L-glutamate + ADP + phosphate + 2 H(+). Allows the formation of correctly charged Asn-tRNA(Asn) or Gln-tRNA(Gln) through the transamidation of misacylated Asp-tRNA(Asn) or Glu-tRNA(Gln) in organisms which lack either or both of asparaginyl-tRNA or glutaminyl-tRNA synthetases. The reaction takes place in the presence of glutamine and ATP through an activated phospho-Asp-tRNA(Asn) or phospho-Glu-tRNA(Gln). The protein is Aspartyl/glutamyl-tRNA(Asn/Gln) amidotransferase subunit B 1 of Syntrophus aciditrophicus (strain SB).